The sequence spans 435 residues: UPF0597 protein AHA_4077 (435 aa).

It belongs to the UPF0597 family.

This is UPF0597 protein AHA_4077 from Aeromonas hydrophila subsp. hydrophila (strain ATCC 7966 / DSM 30187 / BCRC 13018 / CCUG 14551 / JCM 1027 / KCTC 2358 / NCIMB 9240 / NCTC 8049).